A 330-amino-acid chain; its full sequence is Short chain dehydrogenase yanD (330 aa).

Residues Lys57, Asp86, Asn113, Tyr204, and Lys208 each contribute to the NADP(+) site. Residue Tyr204 is the Proton donor of the active site. Lys208 serves as the catalytic Lowers pKa of active site Tyr.

Belongs to the short-chain dehydrogenases/reductases (SDR) family.

The protein operates within secondary metabolite biosynthesis; terpenoid biosynthesis. Functionally, short chain dehydrogenase; part of the gene cluster that mediates the biosynthesis of yanuthone D, a fungal isoprenoid epoxycyclohexenone that acts as an antibiotic against fungi and bacteria. The first step of the pathway is the synthesis of 6-methylsalicylic acid (6-MSA) by the polyketide synthase yanA. 6-MSA is then converted to m-cresol by the decarboxylase yanB. The cytochrome P450 monooxygenase yanC then catalyzes the oxidation of m-cresol to toluquinol. Epoxidation of toluquinol is then performed by the short chain dehydrogenase yanD, with the help of yanE, and a further prenylation by yanG leads to 7-deacetoxyyanuthone A. The next step is the hydroxylation of C-22 of 7-deacetoxyyanuthone A by the cytochrome P450 monooxygenase yanH to yield 22-deacetylyanuthone A. O-Mevalon transferase yanI then attaches mevalon to the hydroxyl group of 22-deacetylyanuthone A to produce yanuthone E. Finally, the FAD-dependent monooxygenase yanF oxidizes the hydroxyl group at C15 of yanuthone E to form yanuthone D. Furthermore, several branching points in the pathway lead to the production of yanuthones F and G from 7-deacetoxyyanuthone A; yanuthones H and I from 22-deacetylyanuthone A; and yanuthone J from yanuthone E. YanD is also involved in the synthesis of yanuthone X1 which does not have 6-methylsalicylic acid (6-MSA) as precursor. In Aspergillus niger (strain ATCC 1015 / CBS 113.46 / FGSC A1144 / LSHB Ac4 / NCTC 3858a / NRRL 328 / USDA 3528.7), this protein is Short chain dehydrogenase yanD.